Consider the following 208-residue polypeptide: Thymidylate kinase (208 aa).

Position 10–17 (10–17 (GPEGSGKT)) interacts with ATP.

This sequence belongs to the thymidylate kinase family.

The catalysed reaction is dTMP + ATP = dTDP + ADP. Functionally, phosphorylation of dTMP to form dTDP in both de novo and salvage pathways of dTTP synthesis. The protein is Thymidylate kinase of Bacillus cereus (strain B4264).